The sequence spans 295 residues: 3-methyl-2-oxobutanoate hydroxymethyltransferase (295 aa).

Positions 1–30 (MTSGRAMSPEETAPYGTGPARAESAPDAPA) are disordered. Positions 76 and 115 each coordinate Mg(2+). Residues 76–77 (DS), aspartate 115, and lysine 145 each bind 3-methyl-2-oxobutanoate. Glutamate 147 is a Mg(2+) binding site. The Proton acceptor role is filled by glutamate 213.

Belongs to the PanB family. In terms of assembly, homodecamer; pentamer of dimers. It depends on Mg(2+) as a cofactor.

It localises to the cytoplasm. It carries out the reaction 3-methyl-2-oxobutanoate + (6R)-5,10-methylene-5,6,7,8-tetrahydrofolate + H2O = 2-dehydropantoate + (6S)-5,6,7,8-tetrahydrofolate. The protein operates within cofactor biosynthesis; (R)-pantothenate biosynthesis; (R)-pantoate from 3-methyl-2-oxobutanoate: step 1/2. Functionally, catalyzes the reversible reaction in which hydroxymethyl group from 5,10-methylenetetrahydrofolate is transferred onto alpha-ketoisovalerate to form ketopantoate. The polypeptide is 3-methyl-2-oxobutanoate hydroxymethyltransferase (Nocardioides sp. (strain ATCC BAA-499 / JS614)).